A 214-amino-acid polypeptide reads, in one-letter code: Large ribosomal subunit protein uL16 (214 aa).

Arg-32 carries the citrulline modification. A Glycyl lysine isopeptide (Lys-Gly) (interchain with G-Cter in SUMO2) cross-link involves residue Lys-175. Lys-188 participates in a covalent cross-link: Glycyl lysine isopeptide (Lys-Gly) (interchain with G-Cter in ubiquitin).

Belongs to the universal ribosomal protein uL16 family. As to quaternary structure, component of the large ribosomal subunit. Mature ribosomes consist of a small (40S) and a large (60S) subunit. The 40S subunit contains about 33 different proteins and 1 molecule of RNA (18S). The 60S subunit contains about 49 different proteins and 3 molecules of RNA (28S, 5.8S and 5S). In terms of processing, citrullinated by PADI4. Ufmylated by UFL1.

The protein resides in the cytoplasm. Component of the large ribosomal subunit. Plays a role in the formation of actively translating ribosomes. May play a role in the embryonic brain development. The chain is Large ribosomal subunit protein uL16 (RPL10) from Oryctolagus cuniculus (Rabbit).